We begin with the raw amino-acid sequence, 245 residues long: 1-(5-phosphoribosyl)-5-[(5-phosphoribosylamino)methylideneamino] imidazole-4-carboxamide isomerase (245 aa).

The Proton acceptor role is filled by aspartate 7. Aspartate 129 (proton donor) is an active-site residue.

It belongs to the HisA/HisF family.

It localises to the cytoplasm. It catalyses the reaction 1-(5-phospho-beta-D-ribosyl)-5-[(5-phospho-beta-D-ribosylamino)methylideneamino]imidazole-4-carboxamide = 5-[(5-phospho-1-deoxy-D-ribulos-1-ylimino)methylamino]-1-(5-phospho-beta-D-ribosyl)imidazole-4-carboxamide. It functions in the pathway amino-acid biosynthesis; L-histidine biosynthesis; L-histidine from 5-phospho-alpha-D-ribose 1-diphosphate: step 4/9. In Shewanella baltica (strain OS155 / ATCC BAA-1091), this protein is 1-(5-phosphoribosyl)-5-[(5-phosphoribosylamino)methylideneamino] imidazole-4-carboxamide isomerase.